Here is a 341-residue protein sequence, read N- to C-terminus: B3 domain-containing transcription factor VRN1 (341 aa).

A DNA-binding region (TF-B3 1) is located at residues 5–98 (FFHKLIFSST…AFSVYIFNLS (94 aa)). The tract at residues 166–223 (GPVKAEEPTPTPKIPKKRGRKKKNADPEEINSSAPRDDDPENRSKFYESASARKRTVT) is disordered. The span at 179 to 188 (IPKKRGRKKK) shows a compositional bias: basic residues. Residues 200–211 (PRDDDPENRSKF) show a composition bias toward basic and acidic residues. Positions 244-338 (FRVVLRPSYL…VLKVTAFRVN (95 aa)) form a DNA-binding region, TF-B3 2.

Expressed in roots and at lower levels in aerial parts.

Its subcellular location is the nucleus. Its function is as follows. Essential protein. Involved in the regulation of vernalization. Acts as a transcriptional repressor of FLC, a major target of the vernalization pathway. Binds DNA in vitro in a non-sequence-specific manner. The sequence is that of B3 domain-containing transcription factor VRN1 from Arabidopsis thaliana (Mouse-ear cress).